Consider the following 591-residue polypeptide: CTP synthase 1 (591 aa).

Position 100 is an N6-acetyllysine (Lys-100). Residues 300–554 (SIALVGKYTK…LASVGRLSHY (255 aa)) form the Glutamine amidotransferase type-1 domain. Residues Cys-399, His-526, and Glu-528 each act as for GATase activity in the active site. Phosphoserine is present on residues Ser-562, Ser-568, Ser-571, Ser-573, Ser-574, Ser-575, Ser-578, and Ser-587. Positions 562–591 (SPRDTYSDRSGSSSPDSEITELKFPSINHD) are disordered. Positions 569–578 (DRSGSSSPDS) are enriched in low complexity.

This sequence belongs to the CTP synthase family. Widely expressed.

It localises to the cytoplasm. The protein localises to the cytosol. It carries out the reaction UTP + L-glutamine + ATP + H2O = CTP + L-glutamate + ADP + phosphate + 2 H(+). It functions in the pathway pyrimidine metabolism; CTP biosynthesis via de novo pathway; CTP from UDP: step 2/2. Its activity is regulated as follows. Activated by GTP and inhibited by CTP. Functionally, this enzyme is involved in the de novo synthesis of CTP, a precursor of DNA, RNA and phospholipids. Catalyzes the ATP-dependent amination of UTP to CTP with either L-glutamine or ammonia as a source of nitrogen. This enzyme and its product, CTP, play a crucial role in the proliferation of activated lymphocytes and therefore in immunity. The protein is CTP synthase 1 of Homo sapiens (Human).